The chain runs to 132 residues: Small ribosomal subunit protein uS8 (132 aa).

The protein belongs to the universal ribosomal protein uS8 family. As to quaternary structure, part of the 30S ribosomal subunit. Contacts proteins S5 and S12.

One of the primary rRNA binding proteins, it binds directly to 16S rRNA central domain where it helps coordinate assembly of the platform of the 30S subunit. The protein is Small ribosomal subunit protein uS8 of Streptomyces griseus subsp. griseus (strain JCM 4626 / CBS 651.72 / NBRC 13350 / KCC S-0626 / ISP 5235).